Here is a 61-residue protein sequence, read N- to C-terminus: Potassium channel toxin alpha-KTx 6.7 (61 aa).

The N-terminal stretch at 1-23 (MNAKFILLLLVVTTTMLLPDTQG) is a signal peptide. 4 cysteine pairs are disulfide-bonded: cysteine 29/cysteine 50, cysteine 35/cysteine 55, cysteine 39/cysteine 57, and cysteine 45/cysteine 60. Position 60 is a cysteine amide (cysteine 60).

Belongs to the short scorpion toxin superfamily. Potassium channel inhibitor family. Alpha-KTx 06 subfamily. Expressed by the venom gland.

It localises to the secreted. In terms of biological role, blocker of voltage-gated potassium channels. This chain is Potassium channel toxin alpha-KTx 6.7, found in Opistophthalmus carinatus (African yellow leg scorpion).